The sequence spans 1760 residues: Chitin synthase csmB (1760 aa).

The segment covering 1–17 (MSNRFSVYSSHSTGVSS) has biased composition (low complexity). A disordered region spans residues 1–23 (MSNRFSVYSSHSTGVSSARPSAP). Positions 1-374 (MSNRFSVYSS…TVSITVVDIP (374 aa)) constitute a Myosin motor domain. Asn275 is a glycosylation site (N-linked (GlcNAc...) asparagine). The segment at 344–363 (LDNDPSTSGGSGPGGQWTDD) is disordered. Position 374 (Pro374) is a region of interest, actin-binding. The next 2 membrane-spanning stretches (helical) occupy residues 731–751 (IWVG…LRWI) and 767–787 (LVLM…IIAF). N-linked (GlcNAc...) asparagine glycosylation is found at Asn878, Asn906, and Asn995. The helical transmembrane segment at 1029–1049 (ILLSFTVLICAVILVKFVSAL) threads the bilayer. Asn1394 carries an N-linked (GlcNAc...) asparagine glycan. 3 helical membrane-spanning segments follow: residues 1419 to 1439 (FVVL…VYLG), 1452 to 1472 (FPMI…IIFL), and 1480 to 1500 (IGWM…LPLY). N-linked (GlcNAc...) asparagine glycans are attached at residues Asn1584 and Asn1652. One can recognise a DEK-C domain in the interval 1702-1758 (GPDEGAITEAIRACLAEVDLDTVTKKQVRALVEQRLQTTLMGDKRTFLDRQIDHELA).

This sequence in the N-terminal section; belongs to the TRAFAC class myosin-kinesin ATPase superfamily. Myosin family. The protein in the C-terminal section; belongs to the chitin synthase family. Class V subfamily.

The protein localises to the cell membrane. It localises to the cell septum. Its subcellular location is the cell tip. It catalyses the reaction [(1-&gt;4)-N-acetyl-beta-D-glucosaminyl](n) + UDP-N-acetyl-alpha-D-glucosamine = [(1-&gt;4)-N-acetyl-beta-D-glucosaminyl](n+1) + UDP + H(+). Its function is as follows. Polymerizes chitin, a structural polymer of the cell wall and septum, by transferring the sugar moiety of UDP-GlcNAc to the non-reducing end of the growing chitin polymer. Plays an important role in septal growth or maintenance. Mediates colony spore formation. This is Chitin synthase csmB from Aspergillus niger (strain ATCC MYA-4892 / CBS 513.88 / FGSC A1513).